The sequence spans 356 residues: Mitogen-activated protein kinase PMK1 (356 aa).

The 289-residue stretch at 24 to 312 (YDIQDVVGEG…VEEALKHPYL (289 aa)) folds into the Protein kinase domain. ATP is bound by residues 30–38 (VGEGAYGVV) and Lys-53.

It belongs to the protein kinase superfamily. CMGC Ser/Thr protein kinase family. MAP kinase subfamily. Requires Mg(2+) as cofactor. In terms of processing, phosphorylated by MST7.

It catalyses the reaction L-seryl-[protein] + ATP = O-phospho-L-seryl-[protein] + ADP + H(+). The catalysed reaction is L-threonyl-[protein] + ATP = O-phospho-L-threonyl-[protein] + ADP + H(+). Mitogen-activated protein kinase; part of the MST11-MST7-PMK1 MAP kinase (MAPK) cascade that is essential for appressorium formation, penetration and invasive growth. Central regulator of appressorium development that acts downstream of the cAMP signal. The MST11-MST7-PMK1 MAP kinase cascade transduces signals from the cell surface sensors MDB2 and SHO1 that recognize various surface signals such as surface hydrophobicity, cutin monomers, and rice leaf waxes. Regulates expression of secreted fungal effector proteins implicated of host immune defenses, preventing reactive oxygen species generation and excessive callose deposition at plasmodesmata. Furthermore, controls the hyphal constriction required for fungal growth from one rice cell to the neighboring cell, enabling host tissue colonization and blast disease. Targets downstream of the PMK1-MAPK pathway include transcription factor MST12 and pathogenicity-related genes GAS1 and GAS2, both of which are expressed during appressorium formation, even if regulation of MST12 is not associated with expression of GAS1 or GAS2. This chain is Mitogen-activated protein kinase PMK1, found in Pyricularia oryzae (Rice blast fungus).